A 68-amino-acid chain; its full sequence is Probable tautomerase jhp_0858 (68 aa).

Catalysis depends on proline 2, which acts as the Proton acceptor; via imino nitrogen.

It belongs to the 4-oxalocrotonate tautomerase family.

The sequence is that of Probable tautomerase jhp_0858 from Helicobacter pylori (strain J99 / ATCC 700824) (Campylobacter pylori J99).